A 456-amino-acid chain; its full sequence is Probable hexose phosphate transport protein (456 aa).

11 helical membrane passes run 34-54, 70-90, 113-133, 161-181, 185-205, 257-277, 302-322, 331-351, 363-383, 394-414, and 421-441; these read IFYS…SFTF, LGII…VSGV, IFFG…INGW, VWST…GVAI, GWRG…FILI, YVLS…IYVV, LCVS…GWLS, GPMN…LWGT, FLFI…LAAA, ASGF…YPLG, and GWHG…ILFL.

It belongs to the major facilitator superfamily. Organophosphate:Pi antiporter (OPA) (TC 2.A.1.4) family.

The protein localises to the cell membrane. Transport protein for sugar phosphate uptake. The sequence is that of Probable hexose phosphate transport protein from Chlamydia trachomatis serovar D (strain ATCC VR-885 / DSM 19411 / UW-3/Cx).